A 115-amino-acid polypeptide reads, in one-letter code: Mediator of RNA polymerase II transcription subunit 22 (115 aa).

This sequence belongs to the Mediator complex subunit 22 family. As to quaternary structure, component of the Mediator complex.

It is found in the nucleus. Component of the Mediator complex, a coactivator involved in the regulated transcription of nearly all RNA polymerase II-dependent genes. Mediator functions as a bridge to convey information from gene-specific regulatory proteins to the basal RNA polymerase II transcription machinery. Mediator is recruited to promoters by direct interactions with regulatory proteins and serves as a scaffold for the assembly of a functional preinitiation complex with RNA polymerase II and the general transcription factors. This is Mediator of RNA polymerase II transcription subunit 22 (SRB6) from Candida albicans (strain SC5314 / ATCC MYA-2876) (Yeast).